Here is a 212-residue protein sequence, read N- to C-terminus: uncharacterized protein (212 aa).

S-adenosyl-L-methionine is bound by residues Gly-53, Glu-74, and Asp-97.

This sequence belongs to the methyltransferase superfamily. YrrT family.

Functionally, could be a S-adenosyl-L-methionine-dependent methyltransferase. This is an uncharacterized protein from Bacillus cereus (strain ATCC 14579 / DSM 31 / CCUG 7414 / JCM 2152 / NBRC 15305 / NCIMB 9373 / NCTC 2599 / NRRL B-3711).